A 355-amino-acid polypeptide reads, in one-letter code: Aromatic amino acid aminotransferase (355 aa).

Lys-217 is modified (N6-(pyridoxal phosphate)lysine).

This sequence belongs to the class-II pyridoxal-phosphate-dependent aminotransferase family. In terms of assembly, homodimer. Requires pyridoxal 5'-phosphate as cofactor.

The enzyme catalyses an aromatic L-alpha-amino acid + 2-oxoglutarate = an aromatic oxo-acid + L-glutamate. In terms of biological role, aminotransferase that catalyzes the conversion of aromatic amino acids and 2-oxoglutarate into corresponding aromatic oxo acids and L-glutamate. This is Aromatic amino acid aminotransferase from Mycolicibacterium paratuberculosis (strain ATCC BAA-968 / K-10) (Mycobacterium paratuberculosis).